A 573-amino-acid polypeptide reads, in one-letter code: Arylsulfatase I (573 aa).

The signal sequence occupies residues 1–23 (MHALSGFSLVSLLSLGYLSWDWA). Ca(2+)-binding residues include aspartate 55, aspartate 56, and cysteine 93. Cysteine 93 acts as the Nucleophile in catalysis. Cysteine 93 bears the 3-oxoalanine (Cys) mark. A substrate-binding site is contributed by lysine 147. Histidine 149 is an active-site residue. Substrate is bound at residue histidine 239. Asparagine 276 and asparagine 288 each carry an N-linked (GlcNAc...) asparagine glycan. Ca(2+) contacts are provided by aspartate 297 and asparagine 298. A substrate-binding site is contributed by lysine 315. Asparagine 466 and asparagine 496 each carry an N-linked (GlcNAc...) asparagine glycan. Residues 506–550 (AANPRAHPDFNGGAWGPWASDEDEEEEDEEEEGRARSFPRGRRKK) form a disordered region. Positions 525–537 (SDEDEEEEDEEEE) are enriched in acidic residues.

This sequence belongs to the sulfatase family. It depends on Ca(2+) as a cofactor. The oxidation of Cys-93 residue to 3-oxoalanine (also known as C(alpha)-formylglycine) by SUMF1/Sulfatase-modifying factor 1, seems critical for catalytic activity.

It localises to the secreted. The protein resides in the endoplasmic reticulum. Displays arylsulfatase activity at neutral pH, when co-expressed with SUMF1; arylsulfatase activity is measured in the secretion medium of retinal cell line, but no activity is recorded when measured in cell extracts. This is Arylsulfatase I (Arsi) from Rattus norvegicus (Rat).